A 372-amino-acid polypeptide reads, in one-letter code: Alpha-parvin (372 aa).

The tract at residues 1–31 is disordered; sequence MATSPQKSPLVPKSPTPKSPPSRKKDDSFLG. An N-acetylalanine modification is found at Ala2. Ser8, Ser14, and Ser19 each carry phosphoserine. The segment at 21–25 is interaction with ARHGAP31; that stretch reads PSRKK. Ser28 and Ser62 each carry phosphoserine. Calponin-homology (CH) domains follow at residues 95 to 202 and 262 to 369; these read QELM…QYFR and NVVK…TKYR. A required for interaction with TESK1 and ILK region spans residues 223-372; the sequence is GILQSRQIQE…NLFTKYRNVE (150 aa).

It belongs to the parvin family. As to quaternary structure, component of the heterotrimeric IPP (ILK-PINCH-PARVIN) complex composed of ILK, LIMS1/PINCH and PARVA; the complex binds to F-actin via the C-terminal tail of LIMS1 and the N-terminal region of PARVA, promoting F-actin filament bundling. Interacts with TGFB1I1. Interacts with ARHGAP31. Interacts with the actin cytoskeleton. Interacts (via C-terminus) with TESK1 (via C-terminus); the interaction inhibits TESK1 kinase activity. Interacts with PXN/PAXILLIN (via LD motif 4).

The protein resides in the cell junction. Its subcellular location is the focal adhesion. The protein localises to the cell membrane. It localises to the cytoplasm. It is found in the cytoskeleton. The protein resides in the myofibril. Its subcellular location is the sarcomere. The protein localises to the z line. In terms of biological role, plays a role in sarcomere organization and in smooth muscle cell contraction. Required for normal development of the embryonic cardiovascular system, and for normal septation of the heart outflow tract. Plays a role in sprouting angiogenesis and is required for normal adhesion of vascular smooth muscle cells to endothelial cells during blood vessel development. Plays a role in the reorganization of the actin cytoskeleton, formation of lamellipodia and ciliogenesis. Plays a role in the establishment of cell polarity, cell adhesion, cell spreading, and directed cell migration. Within the IPP (ILK-PINCH-PARVIN) complex, binds to F-actin, promoting F-actin bundling, a process required to generate force for actin cytoskeleton reorganization and subsequent dynamic cell adhesion events such as cell spreading and migration. The chain is Alpha-parvin (Parva) from Mus musculus (Mouse).